Here is a 248-residue protein sequence, read N- to C-terminus: Probable transcriptional regulatory protein PHZ_c3068 (248 aa).

The protein belongs to the TACO1 family.

Its subcellular location is the cytoplasm. The protein is Probable transcriptional regulatory protein PHZ_c3068 of Phenylobacterium zucineum (strain HLK1).